A 140-amino-acid chain; its full sequence is Ribosome-binding factor A (140 aa).

This sequence belongs to the RbfA family. Monomer. Binds 30S ribosomal subunits, but not 50S ribosomal subunits or 70S ribosomes.

It localises to the cytoplasm. Functionally, one of several proteins that assist in the late maturation steps of the functional core of the 30S ribosomal subunit. Associates with free 30S ribosomal subunits (but not with 30S subunits that are part of 70S ribosomes or polysomes). Required for efficient processing of 16S rRNA. May interact with the 5'-terminal helix region of 16S rRNA. This Cereibacter sphaeroides (strain ATCC 17025 / ATH 2.4.3) (Rhodobacter sphaeroides) protein is Ribosome-binding factor A.